We begin with the raw amino-acid sequence, 286 residues long: Bifunctional protein FolD (286 aa).

NADP(+) is bound by residues 164-166 (GRS), Ser-193, and Ile-234.

It belongs to the tetrahydrofolate dehydrogenase/cyclohydrolase family. In terms of assembly, homodimer.

It carries out the reaction (6R)-5,10-methylene-5,6,7,8-tetrahydrofolate + NADP(+) = (6R)-5,10-methenyltetrahydrofolate + NADPH. The catalysed reaction is (6R)-5,10-methenyltetrahydrofolate + H2O = (6R)-10-formyltetrahydrofolate + H(+). It functions in the pathway one-carbon metabolism; tetrahydrofolate interconversion. Its function is as follows. Catalyzes the oxidation of 5,10-methylenetetrahydrofolate to 5,10-methenyltetrahydrofolate and then the hydrolysis of 5,10-methenyltetrahydrofolate to 10-formyltetrahydrofolate. The chain is Bifunctional protein FolD from Nitratidesulfovibrio vulgaris (strain ATCC 29579 / DSM 644 / CCUG 34227 / NCIMB 8303 / VKM B-1760 / Hildenborough) (Desulfovibrio vulgaris).